The sequence spans 777 residues: Aconitate hydratase, mitochondrial (777 aa).

Residues Q96 and 189 to 191 (DSH) contribute to the substrate site. [4Fe-4S] cluster contacts are provided by C383, C446, and C449. Residues R472, R477, R605, and 668–669 (SR) contribute to the substrate site.

Belongs to the aconitase/IPM isomerase family. Monomer. Requires [4Fe-4S] cluster as cofactor.

It localises to the mitochondrion. The catalysed reaction is citrate = D-threo-isocitrate. It functions in the pathway carbohydrate metabolism; tricarboxylic acid cycle; isocitrate from oxaloacetate: step 2/2. Its function is as follows. Catalyzes the isomerization of citrate to isocitrate via cis-aconitate, a step in the citric acid cycle. The protein is Aconitate hydratase, mitochondrial (ACO1) of Candida albicans (strain SC5314 / ATCC MYA-2876) (Yeast).